The sequence spans 299 residues: Putative ammonium transporter 4 member 1 (299 aa).

Transmembrane regions (helical) follow at residues 16–36, 59–79, 104–124, 158–178, and 218–238; these read AWPL…LVIL, VLLT…GFNG, LLVW…ISAV, VLHT…LLLL, and AGIA…CLAV.

This sequence belongs to the ammonia transporter channel (TC 1.A.11.2) family.

It localises to the membrane. The sequence is that of Putative ammonium transporter 4 member 1 (AMT4-1) from Oryza sativa subsp. japonica (Rice).